Here is a 132-residue protein sequence, read N- to C-terminus: Small ribosomal subunit protein uS8c (132 aa).

This sequence belongs to the universal ribosomal protein uS8 family. Part of the 30S ribosomal subunit.

The protein localises to the plastid. Its subcellular location is the chloroplast. In terms of biological role, one of the primary rRNA binding proteins, it binds directly to 16S rRNA central domain where it helps coordinate assembly of the platform of the 30S subunit. The sequence is that of Small ribosomal subunit protein uS8c (rps8) from Trieres chinensis (Marine centric diatom).